A 624-amino-acid polypeptide reads, in one-letter code: Kelch-like ECH-associated protein 1 (624 aa).

Position 38 is an S-(2-succinyl)cysteine (cysteine 38). Residues 77 to 149 (CDVTLQVKYE…AYTASISVGE (73 aa)) form the BTB domain. An N5-[4-(S-L-cysteinyl)-5-methyl-1H-imidazol-2-yl]-L-ornithine (Arg-Cys) (interchain with C-151 in KEAP1) cross-link involves residue arginine 135. Cysteine 151 carries the post-translational modification S-(2,3-dicarboxypropyl)cysteine; alternate. An S-(2-succinyl)cysteine; alternate modification is found at cysteine 151. Residue cysteine 151 is modified to S-nitrosocysteine; alternate. Residue cysteine 151 forms an N5-[4-(S-L-cysteinyl)-5-methyl-1H-imidazol-2-yl]-L-ornithine (Cys-Arg) (interchain with R-135 in KEAP1) linkage. Positions 184–286 (AIGIANFAEQ…TPRFLQTQLQ (103 aa)) constitute a BACK domain. An S-(2-succinyl)cysteine modification is found at cysteine 241. Residues cysteine 257 and cysteine 273 each carry the S-(2,3-dicarboxypropyl)cysteine modification. At cysteine 288 the chain carries S-(2,3-dicarboxypropyl)cysteine; alternate. Residue cysteine 288 is modified to S-(2-succinyl)cysteine; alternate. Cysteine 319 carries the post-translational modification S-(2-succinyl)cysteine. Kelch repeat units follow at residues 327-372 (LIYT…VVGG), 373-423 (LLYA…VIDG), 424-470 (HIYA…VLNR), 471-517 (LLYA…VLHN), 519-564 (IYAA…VHQG), and 565-611 (KIYV…VTME). Cysteine 434 is modified (S-cGMP-cysteine). An S-(2-succinyl)cysteine modification is found at cysteine 613.

The protein belongs to the KEAP1 family. As to quaternary structure, component of the BCR(KEAP1) E3 ubiquitin ligase complex, at least composed of 2 molecules of CUL3, 2 molecules of KEAP1, and RBX1. Interacts with NFE2L2/NRF2; the interaction is direct. Forms a ternary complex with NFE2L2/NRF2 and PGAM5. Interacts with (phosphorylated) SQSTM1/p62; the interaction is direct and inactivates the BCR(KEAP1) complex by sequestering it in inclusion bodies, promoting its degradation. Interacts with NFE2L1. Interacts with BPTF and PTMA. Interacts with MAP1LC3B. Interacts indirectly with ENC1. Interacts with SESN1 and SESN2. Interacts with HSP90AA1 and HSP90AB1. Interacts with PGCKA1; this interaction prevents the ubiquitination of KEAP1 by TRIM25, thus protecting KEAP1 from degradation. Non-enzymatic covalent modifications of reactive cysteines by electrophile metabolites inactivate the BCR(KEAP1) complex. Accumulation of fumarate promotes the formation of cysteine S-succination (S-(2-succinyl)cysteine), leading to inactivate the BCR(KEAP1) complex and promote NFE2L2/NRF2 nuclear accumulation and activation. Nitric oxide-dependent 8-Nitro-cGMP formation promotes cysteine guanylation (S-cGMP-cysteine), leading to NFE2L2/NRF2 nuclear accumulation and activation. Itaconate, an anti-inflammatory metabolite generated in response to lipopolysaccharide, alkylates cysteines, activating NFE2L2/NRF2. Methylglyoxal, a reactive metabolite that accumulates when the glycolytic enzyme PGK1 is inhibited, promotes formation of a methylimidazole cross-link between proximal Cys-151 and Arg-135 on another KEAP1 molecule, resulting in an inactive dimer that inactivates the BCR(KEAP1) complex. Post-translationally, degraded via a proteasomal-independent process during selective autophagy: interaction with phosphorylated SQSTM1/p62 sequesters KEAP1 in inclusion bodies, leading to its degradation. In terms of processing, auto-ubiquitinated by the BCR(KEAP1) complex. Quinone-induced oxidative stress, but not sulforaphane, increases its ubiquitination. Ubiquitination and subsequent degradation is most pronounced following prolonged exposure of cells to oxidative stress, particularly in glutathione-deficient cells that are highly susceptible to oxidative stress. Deubiquitinated by USP25; leading to stabilization. Ubiquitinated by TRIM25; leading to degradation upon ER stress.

It is found in the cytoplasm. The protein resides in the nucleus. It participates in protein modification; protein ubiquitination. With respect to regulation, ubiquitin ligase activity of the BCR(KEAP1) complex is inhibited by oxidative stress and electrophile metabolites such as sulforaphane. Electrophile metabolites react with reactive cysteine residues in KEAP1 and trigger non-enzymatic covalent modifications of these cysteine residues, leading to inactivate the ubiquitin ligase activity of the BCR(KEAP1) complex. Selective autophagy also inactivates the BCR(KEAP1) complex via interaction between KEAP1 and SQSTM1/p62, which sequesters the complex in inclusion bodies and promotes its degradation. Its function is as follows. Substrate-specific adapter of a BCR (BTB-CUL3-RBX1) E3 ubiquitin ligase complex that regulates the response to oxidative stress by targeting NFE2L2/NRF2 for ubiquitination. KEAP1 acts as a key sensor of oxidative and electrophilic stress: in normal conditions, the BCR(KEAP1) complex mediates ubiquitination and degradation of NFE2L2/NRF2, a transcription factor regulating expression of many cytoprotective genes. In response to oxidative stress, different electrophile metabolites trigger non-enzymatic covalent modifications of highly reactive cysteine residues in KEAP1, leading to inactivate the ubiquitin ligase activity of the BCR(KEAP1) complex, promoting NFE2L2/NRF2 nuclear accumulation and expression of phase II detoxifying enzymes. In response to selective autophagy, KEAP1 is sequestered in inclusion bodies following its interaction with SQSTM1/p62, leading to inactivation of the BCR(KEAP1) complex and activation of NFE2L2/NRF2. The BCR(KEAP1) complex also mediates ubiquitination of SQSTM1/p62, increasing SQSTM1/p62 sequestering activity and degradation. The BCR(KEAP1) complex also targets BPTF and PGAM5 for ubiquitination and degradation by the proteasome. The protein is Kelch-like ECH-associated protein 1 of Mus musculus (Mouse).